A 65-amino-acid chain; its full sequence is Muscarinic toxin 3 (65 aa).

Intrachain disulfides connect Cys-3/Cys-24, Cys-17/Cys-42, Cys-46/Cys-57, and Cys-58/Cys-63.

It belongs to the three-finger toxin family. Short-chain subfamily. Aminergic toxin sub-subfamily. As to expression, expressed by the venom gland.

Its subcellular location is the secreted. In terms of biological role, potent antagonist (IC(50)=1-10 nM) of M4 (CHRM4) muscarinic receptors, and CHRM1, ADRA1A, ADRA2A and ADRA2C adrenergic receptors. Also antagonises ADRA1B and ADRA1D adrenergic receptors with a 10-times lower affinity. In Dendroaspis angusticeps (Eastern green mamba), this protein is Muscarinic toxin 3.